Consider the following 253-residue polypeptide: MSKSDVFHLGLTKNDLQGAQLAIVPGDPERVEKIAALMDKPVKLASHREFTSWRAELDGKAVIVCSTGIGGPSTSIAVEELAQLGIRTFLRIGTTGAIQPHINVGDVLVTTASVRLDGASLHFAPMEFPAVADFACTTALVEAAKSIGATTHVGVTASSDTFYPGQERYDTYSGRVVRRFKGSMEEWQAMGVMNYEMESATLLTMCASQGLRAGMVAGVIVNRTQQEIPNAETMKQTESHAVKIVVEAARRLL.

Belongs to the PNP/UDP phosphorylase family. As to quaternary structure, homohexamer.

The protein resides in the cytoplasm. The enzyme catalyses uridine + phosphate = alpha-D-ribose 1-phosphate + uracil. Its pathway is pyrimidine metabolism; UMP biosynthesis via salvage pathway; uracil from uridine (phosphorylase route): step 1/1. Catalyzes the reversible phosphorylytic cleavage of uridine to uracil and ribose-1-phosphate. This is Uridine phosphorylase (udp) from Salmonella typhi.